Here is a 348-residue protein sequence, read N- to C-terminus: Selenide, water dikinase (348 aa).

The active site involves cysteine 17. Residues lysine 20 and 47-49 each bind ATP; that span reads THD. Aspartate 50 is a Mg(2+) binding site. ATP contacts are provided by residues aspartate 67, aspartate 90, and 138–140; that span reads GHT. Aspartate 90 is a Mg(2+) binding site. Aspartate 226 serves as a coordination point for Mg(2+).

This sequence belongs to the selenophosphate synthase 1 family. Class I subfamily. As to quaternary structure, homodimer. Mg(2+) is required as a cofactor.

The catalysed reaction is hydrogenselenide + ATP + H2O = selenophosphate + AMP + phosphate + 2 H(+). Its function is as follows. Synthesizes selenophosphate from selenide and ATP. In Porphyromonas gingivalis (strain ATCC 33277 / DSM 20709 / CIP 103683 / JCM 12257 / NCTC 11834 / 2561), this protein is Selenide, water dikinase.